The primary structure comprises 739 residues: Phosphoribosylformylglycinamidine synthase subunit PurL (739 aa).

Histidine 54 is a catalytic residue. Residues tyrosine 57 and lysine 96 each coordinate ATP. Glutamate 98 is a Mg(2+) binding site. Residues 99–102 and arginine 121 contribute to the substrate site; that span reads SHNH. The Proton acceptor role is filled by histidine 100. Aspartate 122 contributes to the Mg(2+) binding site. Glutamine 245 lines the substrate pocket. Residue aspartate 273 participates in Mg(2+) binding. 317 to 319 provides a ligand contact to substrate; it reads ESQ. ATP contacts are provided by aspartate 500 and glycine 537. Asparagine 538 provides a ligand contact to Mg(2+). Residue serine 540 coordinates substrate.

It belongs to the FGAMS family. As to quaternary structure, monomer. Part of the FGAM synthase complex composed of 1 PurL, 1 PurQ and 2 PurS subunits.

It is found in the cytoplasm. It catalyses the reaction N(2)-formyl-N(1)-(5-phospho-beta-D-ribosyl)glycinamide + L-glutamine + ATP + H2O = 2-formamido-N(1)-(5-O-phospho-beta-D-ribosyl)acetamidine + L-glutamate + ADP + phosphate + H(+). The protein operates within purine metabolism; IMP biosynthesis via de novo pathway; 5-amino-1-(5-phospho-D-ribosyl)imidazole from N(2)-formyl-N(1)-(5-phospho-D-ribosyl)glycinamide: step 1/2. Its function is as follows. Part of the phosphoribosylformylglycinamidine synthase complex involved in the purines biosynthetic pathway. Catalyzes the ATP-dependent conversion of formylglycinamide ribonucleotide (FGAR) and glutamine to yield formylglycinamidine ribonucleotide (FGAM) and glutamate. The FGAM synthase complex is composed of three subunits. PurQ produces an ammonia molecule by converting glutamine to glutamate. PurL transfers the ammonia molecule to FGAR to form FGAM in an ATP-dependent manner. PurS interacts with PurQ and PurL and is thought to assist in the transfer of the ammonia molecule from PurQ to PurL. This Bacillus cereus (strain Q1) protein is Phosphoribosylformylglycinamidine synthase subunit PurL.